The primary structure comprises 136 residues: Globin CTP-III (136 aa).

One can recognise a Globin domain in the interval 1-136 (LSADQISTVQ…TFFGMIFSKM (136 aa)). Position 87 (H87) interacts with heme b.

Belongs to the globin family. In terms of assembly, monomer.

This chain is Globin CTP-III, found in Chironomus thummi piger (Midge).